Reading from the N-terminus, the 274-residue chain is Oxidized low-density lipoprotein receptor 1 (274 aa).

Residues 1–28 (MTLDDLKSNSMKDQPDEKSNGDKAEGPR) form a disordered region. Residues 1-37 (MTLDDLKSNSMKDQPDEKSNGDKAEGPRSLSTLRWRP) lie on the Cytoplasmic side of the membrane. Over residues 13–26 (DQPDEKSNGDKAEG) the composition is skewed to basic and acidic residues. A helical; Signal-anchor for type II membrane protein membrane pass occupies residues 38–60 (AALILGLLCLGLLVTVILLIIQL). Residue C46 is the site of S-palmitoyl cysteine attachment. The tract at residues 61-150 (SQVSDLLKQQ…SGPCPQDWLW (90 aa)) is neck. The Extracellular segment spans residues 61-274 (SQVSDLLKQQ…QKRANLLRAQ (214 aa)). Positions 89-142 (RQAEKSSQESQRELTEMIETLAHKLDEKSKKLMELQQQNLNLQKALEKAANFSG) form a coiled coil. N139 carries an N-linked (GlcNAc...) asparagine glycan. Cystine bridges form between C144–C155, C172–C264, and C243–C256. Positions 151–265 (HEENCYKFSS…CILNAFSICQ (115 aa)) constitute a C-type lectin domain.

As to quaternary structure, homodimer; disulfide-linked. May form a hexamer composed of 3 homodimers. Interacts with HSP70. In terms of processing, N-glycosylated.

It is found in the cell membrane. Its subcellular location is the membrane raft. The protein localises to the secreted. Receptor that mediates the recognition, internalization and degradation of oxidatively modified low density lipoprotein (oxLDL) by vascular endothelial cells. OxLDL is a marker of atherosclerosis that induces vascular endothelial cell activation and dysfunction, resulting in pro-inflammatory responses, pro-oxidative conditions and apoptosis. Its association with oxLDL induces the activation of NF-kappa-B through an increased production of intracellular reactive oxygen and a variety of pro-atherogenic cellular responses including a reduction of nitric oxide (NO) release, monocyte adhesion and apoptosis. In addition to binding oxLDL, it acts as a receptor for the HSP70 protein involved in antigen cross-presentation to naive T-cells in dendritic cells, thereby participating in cell-mediated antigen cross-presentation. Also involved in inflammatory process, by acting as a leukocyte-adhesion molecule at the vascular interface in endotoxin-induced inflammation. Also acts as a receptor for advanced glycation end (AGE) products, activated platelets, monocytes, apoptotic cells and both Gram-negative and Gram-positive bacteria. The protein is Oxidized low-density lipoprotein receptor 1 (OLR1) of Sus scrofa (Pig).